Here is a 338-residue protein sequence, read N- to C-terminus: D-erythrose-4-phosphate dehydrogenase (338 aa).

11 to 12 lines the NAD(+) pocket; sequence RI. Substrate is bound by residues 153–155, Arg-199, 212–213, and Arg-235; these read SCT and TK. Residue Cys-154 is the Nucleophile of the active site. Position 317 (Asn-317) interacts with NAD(+).

Belongs to the glyceraldehyde-3-phosphate dehydrogenase family. Epd subfamily. Homotetramer.

It localises to the cytoplasm. It carries out the reaction D-erythrose 4-phosphate + NAD(+) + H2O = 4-phospho-D-erythronate + NADH + 2 H(+). It functions in the pathway cofactor biosynthesis; pyridoxine 5'-phosphate biosynthesis; pyridoxine 5'-phosphate from D-erythrose 4-phosphate: step 1/5. Its function is as follows. Catalyzes the NAD-dependent conversion of D-erythrose 4-phosphate to 4-phosphoerythronate. The sequence is that of D-erythrose-4-phosphate dehydrogenase from Shewanella piezotolerans (strain WP3 / JCM 13877).